The following is a 419-amino-acid chain: Serine hydroxymethyltransferase (419 aa).

(6S)-5,6,7,8-tetrahydrofolate contacts are provided by residues L121 and 125–127 (GHL). K230 carries the post-translational modification N6-(pyridoxal phosphate)lysine. 355 to 357 (SPF) is a binding site for (6S)-5,6,7,8-tetrahydrofolate.

It belongs to the SHMT family. Homodimer. Pyridoxal 5'-phosphate serves as cofactor.

It is found in the cytoplasm. It carries out the reaction (6R)-5,10-methylene-5,6,7,8-tetrahydrofolate + glycine + H2O = (6S)-5,6,7,8-tetrahydrofolate + L-serine. It participates in one-carbon metabolism; tetrahydrofolate interconversion. It functions in the pathway amino-acid biosynthesis; glycine biosynthesis; glycine from L-serine: step 1/1. In terms of biological role, catalyzes the reversible interconversion of serine and glycine with tetrahydrofolate (THF) serving as the one-carbon carrier. This reaction serves as the major source of one-carbon groups required for the biosynthesis of purines, thymidylate, methionine, and other important biomolecules. Also exhibits THF-independent aldolase activity toward beta-hydroxyamino acids, producing glycine and aldehydes, via a retro-aldol mechanism. This chain is Serine hydroxymethyltransferase, found in Streptococcus uberis (strain ATCC BAA-854 / 0140J).